We begin with the raw amino-acid sequence, 368 residues long: Phosphate acyltransferase (368 aa).

Residues 338–368 (GDGGHDAGGAGTASPAPGHHAEPSAAQSSKA) are disordered.

It belongs to the PlsX family. Homodimer. Probably interacts with PlsY.

The protein localises to the cytoplasm. The catalysed reaction is a fatty acyl-[ACP] + phosphate = an acyl phosphate + holo-[ACP]. It functions in the pathway lipid metabolism; phospholipid metabolism. Catalyzes the reversible formation of acyl-phosphate (acyl-PO(4)) from acyl-[acyl-carrier-protein] (acyl-ACP). This enzyme utilizes acyl-ACP as fatty acyl donor, but not acyl-CoA. This is Phosphate acyltransferase from Burkholderia ambifaria (strain MC40-6).